The sequence spans 361 residues: Phosphoserine aminotransferase (361 aa).

Arginine 42 lines the L-glutamate pocket. Residues 76–77 (AR), tryptophan 102, threonine 153, aspartate 173, and glutamine 196 each bind pyridoxal 5'-phosphate. The residue at position 197 (lysine 197) is an N6-(pyridoxal phosphate)lysine. 238 to 239 (NT) contacts pyridoxal 5'-phosphate.

Belongs to the class-V pyridoxal-phosphate-dependent aminotransferase family. SerC subfamily. Homodimer. It depends on pyridoxal 5'-phosphate as a cofactor.

The protein localises to the cytoplasm. It catalyses the reaction O-phospho-L-serine + 2-oxoglutarate = 3-phosphooxypyruvate + L-glutamate. The enzyme catalyses 4-(phosphooxy)-L-threonine + 2-oxoglutarate = (R)-3-hydroxy-2-oxo-4-phosphooxybutanoate + L-glutamate. It participates in amino-acid biosynthesis; L-serine biosynthesis; L-serine from 3-phospho-D-glycerate: step 2/3. It functions in the pathway cofactor biosynthesis; pyridoxine 5'-phosphate biosynthesis; pyridoxine 5'-phosphate from D-erythrose 4-phosphate: step 3/5. Catalyzes the reversible conversion of 3-phosphohydroxypyruvate to phosphoserine and of 3-hydroxy-2-oxo-4-phosphonooxybutanoate to phosphohydroxythreonine. The chain is Phosphoserine aminotransferase from Yersinia pestis bv. Antiqua (strain Angola).